Consider the following 120-residue polypeptide: Ribonuclease P protein component (120 aa).

Belongs to the RnpA family. In terms of assembly, consists of a catalytic RNA component (M1 or rnpB) and a protein subunit.

It catalyses the reaction Endonucleolytic cleavage of RNA, removing 5'-extranucleotides from tRNA precursor.. Functionally, RNaseP catalyzes the removal of the 5'-leader sequence from pre-tRNA to produce the mature 5'-terminus. It can also cleave other RNA substrates such as 4.5S RNA. The protein component plays an auxiliary but essential role in vivo by binding to the 5'-leader sequence and broadening the substrate specificity of the ribozyme. This chain is Ribonuclease P protein component, found in Azoarcus sp. (strain BH72).